The primary structure comprises 113 residues: Ig heavy chain V region 36-60 (113 aa).

The chain is Ig heavy chain V region 36-60 from Mus musculus (Mouse).